An 854-amino-acid chain; its full sequence is V-type proton ATPase 116 kDa subunit a 2 (854 aa).

Over 1-393 the chain is Cytoplasmic; the sequence is MGSLFRSETM…DAYGVGSYQE (393 aa). The helical transmembrane segment at 394 to 412 threads the bilayer; that stretch reads VNPALFTIITFPFLFAVMF. At 413 to 414 the chain is on the vacuolar side; it reads GD. A helical transmembrane segment spans residues 415 to 431; sequence FGHGFVMFLFALLLVLN. Topologically, residues 432–445 are cytoplasmic; the sequence is ENHPRLNQSQEIMR. The helical transmembrane segment at 446 to 475 threads the bilayer; sequence MFFNGRYILLLMGLFSVYTGLIYNDCFSKS. Residues 476–549 lie on the Vacuolar side of the membrane; it reads VNLFGSRWNV…ATNRLTFLNS (74 aa). The chain crosses the membrane as a helical span at residues 550 to 569; the sequence is FKMKMSVILGITHMTFGVIL. Residues 570 to 587 are Cytoplasmic-facing; the sequence is GIFNHLHFRKKFNICLVS. Residues 588-608 traverse the membrane as a helical segment; the sequence is IPELLFMLCIFGYLIFMIIYK. The Vacuolar portion of the chain corresponds to 609 to 651; that stretch reads WLVYSAETSRTAPSILIEFISMFLFLASDTGGLYPGQEHVQRL. The chain crosses the membrane as a helical span at residues 652-671; that stretch reads LLLITVLSVPVLFLGKPLFL. The Cytoplasmic segment spans residues 672-739; that stretch reads LWLHRGRSCF…EILMTQIIHS (68 aa). Ser-695 and Ser-700 each carry phosphoserine. The helical transmembrane segment at 740 to 764 threads the bilayer; sequence IEYCLGCISNTASYLRLWALSLAHA. Residues 765 to 785 lie on the Vacuolar side of the membrane; the sequence is QLSEVLWAMLMHVGLRVDTAY. The chain crosses the membrane as a helical span at residues 786–824; it reads GVLVLLPVIAFFAVLTIFILLIMEGLSAFLHAIRLHWVE. The Cytoplasmic segment spans residues 825–854; it reads FQNKFYVGAGTKFVPFSFRLLSSKFSDDLA.

This sequence belongs to the V-ATPase 116 kDa subunit family. V-ATPase is a heteromultimeric enzyme made up of two complexes: the ATP-hydrolytic V1 complex and the proton translocation V0 complex. The V1 complex consists of three catalytic AB heterodimers that form a heterohexamer, three peripheral stalks each consisting of EG heterodimers, one central rotor including subunits D and F, and the regulatory subunits C and H. The proton translocation complex V0 consists of the proton transport subunit a, a ring of proteolipid subunits c9c'', rotary subunit d, subunits e and f, and the accessory subunits ATP6AP1/Ac45 and ATP6AP2/PRR. Directly interacts with PSCD2 through its N-terminal cytosolic tail in an intra-endosomal acidification-dependent manner. Disruption of this interaction results in the inhibition of endocytosis. Interacts with SPAAR. As to expression, highly expressed in lung, kidney and spleen.

It is found in the cell membrane. The protein localises to the endosome membrane. Functionally, subunit of the V0 complex of vacuolar(H+)-ATPase (V-ATPase), a multisubunit enzyme composed of a peripheral complex (V1) that hydrolyzes ATP and a membrane integral complex (V0) that translocates protons. V-ATPase is responsible for acidifying and maintaining the pH of intracellular compartments and in some cell types, is targeted to the plasma membrane, where it is responsible for acidifying the extracellular environment. Essential component of the endosomal pH-sensing machinery. May play a role in maintaining the Golgi functions, such as glycosylation maturation, by controlling the Golgi pH. In aerobic conditions, involved in intracellular iron homeostasis, thus triggering the activity of Fe(2+) prolyl hydroxylase (PHD) enzymes, and leading to HIF1A hydroxylation and subsequent proteasomal degradation. The sequence is that of V-type proton ATPase 116 kDa subunit a 2 (ATP6V0A2) from Bos taurus (Bovine).